The sequence spans 125 residues: Small ribosomal subunit protein uS12m (125 aa).

2 disordered regions span residues 1–29 (MPTK…QCPQ) and 105–125 (LGIP…PKSK). Positions 10 to 23 (HGREEKQRTDRTRA) are enriched in basic and acidic residues.

The protein belongs to the universal ribosomal protein uS12 family.

The protein localises to the mitochondrion. In terms of biological role, protein S12 is involved in the translation initiation step. This Oryza sativa subsp. japonica (Rice) protein is Small ribosomal subunit protein uS12m (RPS12).